The primary structure comprises 130 residues: Large ribosomal subunit protein bL19 (130 aa).

Belongs to the bacterial ribosomal protein bL19 family.

Its function is as follows. This protein is located at the 30S-50S ribosomal subunit interface and may play a role in the structure and function of the aminoacyl-tRNA binding site. In Burkholderia orbicola (strain MC0-3), this protein is Large ribosomal subunit protein bL19.